A 325-amino-acid chain; its full sequence is uncharacterized protein (325 aa).

Tyrosine 59 (proton donor) is an active-site residue. Histidine 117 contacts substrate.

It belongs to the aldo/keto reductase family.

The protein localises to the cytoplasm. It is found in the nucleus. This is an uncharacterized protein from Schizosaccharomyces pombe (strain 972 / ATCC 24843) (Fission yeast).